Here is a 452-residue protein sequence, read N- to C-terminus: Mitochondrial distribution and morphology protein 10 (452 aa).

A disordered region spans residues 105–130 (PLAPESWDSDGPGHEGSDGQEDETTP).

This sequence belongs to the MDM10 family. Component of the ER-mitochondria encounter structure (ERMES) or MDM complex, composed of MMM1, MDM10, MDM12 and MDM34. Associates with the mitochondrial outer membrane sorting assembly machinery SAM(core) complex.

Its subcellular location is the mitochondrion outer membrane. Its function is as follows. Component of the ERMES/MDM complex, which serves as a molecular tether to connect the endoplasmic reticulum and mitochondria. Components of this complex are involved in the control of mitochondrial shape and protein biogenesis and may function in phospholipid exchange. MDM10 is involved in the late assembly steps of the general translocase of the mitochondrial outer membrane (TOM complex). Functions in the TOM40-specific route of the assembly of outer membrane beta-barrel proteins, including the association of TOM40 with the receptor TOM22 and small TOM proteins. Can associate with the SAM(core) complex as well as the MDM12-MMM1 complex, both involved in late steps of the major beta-barrel assembly pathway, that is responsible for biogenesis of all outer membrane beta-barrel proteins. May act as a switch that shuttles between both complexes and channels precursor proteins into the TOM40-specific pathway. Plays a role in mitochondrial morphology and in the inheritance of mitochondria. This Uncinocarpus reesii (strain UAMH 1704) protein is Mitochondrial distribution and morphology protein 10.